The following is a 198-amino-acid chain: Outer-membrane lipoprotein carrier protein (198 aa).

Residues 1–17 form the signal peptide; sequence MKKILLSLCFLSSVAFA.

The protein belongs to the LolA family. Monomer.

The protein resides in the periplasm. In terms of biological role, participates in the translocation of lipoproteins from the inner membrane to the outer membrane. Only forms a complex with a lipoprotein if the residue after the N-terminal Cys is not an aspartate (The Asp acts as a targeting signal to indicate that the lipoprotein should stay in the inner membrane). This chain is Outer-membrane lipoprotein carrier protein, found in Aliivibrio salmonicida (strain LFI1238) (Vibrio salmonicida (strain LFI1238)).